Here is a 310-residue protein sequence, read N- to C-terminus: S-methyl-5'-thioadenosine phosphorylase (310 aa).

Phosphate-binding positions include Thr-20, 62–63 (RH), and 95–96 (SA). Met-197 is a substrate binding site. Ser-198 is a binding site for phosphate. 221–223 (DYD) is a binding site for substrate.

Belongs to the PNP/MTAP phosphorylase family. MTAP subfamily. In terms of assembly, homotrimer.

The protein localises to the cytoplasm. The protein resides in the nucleus. It carries out the reaction S-methyl-5'-thioadenosine + phosphate = 5-(methylsulfanyl)-alpha-D-ribose 1-phosphate + adenine. The protein operates within amino-acid biosynthesis; L-methionine biosynthesis via salvage pathway; S-methyl-5-thio-alpha-D-ribose 1-phosphate from S-methyl-5'-thioadenosine (phosphorylase route): step 1/1. Catalyzes the reversible phosphorylation of S-methyl-5'-thioadenosine (MTA) to adenine and 5-methylthioribose-1-phosphate. Involved in the breakdown of MTA, a major by-product of polyamine biosynthesis. Responsible for the first step in the methionine salvage pathway after MTA has been generated from S-adenosylmethionine. Has broad substrate specificity with 6-aminopurine nucleosides as preferred substrates. This is S-methyl-5'-thioadenosine phosphorylase from Neurospora crassa (strain ATCC 24698 / 74-OR23-1A / CBS 708.71 / DSM 1257 / FGSC 987).